Consider the following 1141-residue polypeptide: DNA-directed RNA polymerase subunit beta (1141 aa).

Belongs to the RNA polymerase beta chain family. In terms of assembly, the RNAP catalytic core consists of 2 alpha, 1 beta, 1 beta' and 1 omega subunit. When a sigma factor is associated with the core the holoenzyme is formed, which can initiate transcription.

It carries out the reaction RNA(n) + a ribonucleoside 5'-triphosphate = RNA(n+1) + diphosphate. Functionally, DNA-dependent RNA polymerase catalyzes the transcription of DNA into RNA using the four ribonucleoside triphosphates as substrates. The polypeptide is DNA-directed RNA polymerase subunit beta (Frankia casuarinae (strain DSM 45818 / CECT 9043 / HFP020203 / CcI3)).